Here is a 20-residue protein sequence, read N- to C-terminus: Toxin CpTx-4a (20 aa).

This sequence belongs to the spider toxin CSTX family. Expressed by the venom gland.

The protein localises to the secreted. Its function is as follows. Spider venom toxin that exhibits cytolytic activity by forming an alpha-helix across the membrane. Lethal to insect larvae. The sequence is that of Toxin CpTx-4a from Cheiracanthium punctorium (Yellow sac spider).